The sequence spans 75 residues: Translation initiation factor IF-1 (75 aa).

One can recognise an S1-like domain in the interval 1-72 (MSKQDLIEME…TKGRITYRLK (72 aa)).

This sequence belongs to the IF-1 family. In terms of assembly, component of the 30S ribosomal translation pre-initiation complex which assembles on the 30S ribosome in the order IF-2 and IF-3, IF-1 and N-formylmethionyl-tRNA(fMet); mRNA recruitment can occur at any time during PIC assembly.

The protein resides in the cytoplasm. Its function is as follows. One of the essential components for the initiation of protein synthesis. Stabilizes the binding of IF-2 and IF-3 on the 30S subunit to which N-formylmethionyl-tRNA(fMet) subsequently binds. Helps modulate mRNA selection, yielding the 30S pre-initiation complex (PIC). Upon addition of the 50S ribosomal subunit IF-1, IF-2 and IF-3 are released leaving the mature 70S translation initiation complex. This Synechocystis sp. (strain ATCC 27184 / PCC 6803 / Kazusa) protein is Translation initiation factor IF-1.